The following is a 118-amino-acid chain: UPF0251 protein Teth39_0655 (118 aa).

This sequence belongs to the UPF0251 family.

This is UPF0251 protein Teth39_0655 from Thermoanaerobacter pseudethanolicus (strain ATCC 33223 / 39E) (Clostridium thermohydrosulfuricum).